The primary structure comprises 357 residues: Alanine racemase (357 aa).

Lys-35 serves as the catalytic Proton acceptor; specific for D-alanine. Residue Lys-35 is modified to N6-(pyridoxal phosphate)lysine. Arg-130 contacts substrate. The Proton acceptor; specific for L-alanine role is filled by Tyr-253. Substrate is bound at residue Met-302.

This sequence belongs to the alanine racemase family. The cofactor is pyridoxal 5'-phosphate.

It carries out the reaction L-alanine = D-alanine. Its pathway is amino-acid biosynthesis; D-alanine biosynthesis; D-alanine from L-alanine: step 1/1. Its function is as follows. Catalyzes the interconversion of L-alanine and D-alanine. May also act on other amino acids. The sequence is that of Alanine racemase (alr) from Wigglesworthia glossinidia brevipalpis.